The primary structure comprises 359 residues: Histidinol-phosphate aminotransferase (359 aa).

Position 217 is an N6-(pyridoxal phosphate)lysine (K217).

This sequence belongs to the class-II pyridoxal-phosphate-dependent aminotransferase family. Histidinol-phosphate aminotransferase subfamily. In terms of assembly, homodimer. Pyridoxal 5'-phosphate is required as a cofactor.

The catalysed reaction is L-histidinol phosphate + 2-oxoglutarate = 3-(imidazol-4-yl)-2-oxopropyl phosphate + L-glutamate. It participates in amino-acid biosynthesis; L-histidine biosynthesis; L-histidine from 5-phospho-alpha-D-ribose 1-diphosphate: step 7/9. This is Histidinol-phosphate aminotransferase from Salmonella newport (strain SL254).